The chain runs to 1309 residues: Clustered mitochondria protein homolog (1309 aa).

Residues 1 to 34 (MLLNGDCPESLKKEAAAAEPPRENGLDEAGPGDE) form a disordered region. A compositionally biased stretch (basic and acidic residues) spans 9 to 25 (ESLKKEAAAAEPPRENG). 2 positions are modified to phosphoserine: Ser-279 and Ser-281. One can recognise a Clu domain in the interval 335–577 (RAEDAYTSRL…RTFPPDLNFL (243 aa)). Over residues 636-651 (LETPSSLENGGPSSLE) the composition is skewed to polar residues. The segment at 636–674 (LETPSSLENGGPSSLESKSEDPPGQEAGSEEEGSSASGL) is disordered. Residues Ser-654, Ser-664, and Ser-723 each carry the phosphoserine modification. TPR repeat units follow at residues 978 to 1011 (AFHF…FNNV), 1020 to 1053 (CACL…SERV), 1104 to 1137 (ALLD…STKY), and 1146 to 1179 (ALSH…YKTQ). Residues 1264-1278 (HQLQEASRNRDRAEE) are compositionally biased toward basic and acidic residues. The segment at 1264–1309 (HQLQEASRNRDRAEEPMATEPAPAGAPGDLGSQPPAAKDPSPSVQG) is disordered. Residues 1279–1290 (PMATEPAPAGAP) show a composition bias toward low complexity.

It belongs to the CLU family.

Its subcellular location is the cytoplasm. It is found in the cytoplasmic granule. MRNA-binding protein involved in proper cytoplasmic distribution of mitochondria. Specifically binds mRNAs of nuclear-encoded mitochondrial proteins in the cytoplasm and regulates transport or translation of these transcripts close to mitochondria, playing a role in mitochondrial biogenesis. In Homo sapiens (Human), this protein is Clustered mitochondria protein homolog (CLUH).